A 343-amino-acid polypeptide reads, in one-letter code: 3-isopropylmalate dehydrogenase (343 aa).

4 residues coordinate substrate: Arg94, Arg104, Arg128, and Asp218. Residues Asp218, Asp242, and Asp246 each coordinate Mg(2+). Position 278 to 290 (278 to 290 (GSAPDIAGQNKAN)) interacts with NAD(+).

Belongs to the isocitrate and isopropylmalate dehydrogenases family. LeuB type 2 subfamily. Homodimer. It depends on Mg(2+) as a cofactor. Mn(2+) serves as cofactor.

It localises to the cytoplasm. It catalyses the reaction (2R,3S)-3-isopropylmalate + NAD(+) = 4-methyl-2-oxopentanoate + CO2 + NADH. It participates in amino-acid biosynthesis; L-leucine biosynthesis; L-leucine from 3-methyl-2-oxobutanoate: step 3/4. Catalyzes the oxidation of 3-carboxy-2-hydroxy-4-methylpentanoate (3-isopropylmalate) to 3-carboxy-4-methyl-2-oxopentanoate. The product decarboxylates to 4-methyl-2 oxopentanoate. The sequence is that of 3-isopropylmalate dehydrogenase from Bifidobacterium longum (strain DJO10A).